A 59-amino-acid chain; its full sequence is Large ribosomal subunit protein uL30 (59 aa).

Belongs to the universal ribosomal protein uL30 family. As to quaternary structure, part of the 50S ribosomal subunit.

In Photobacterium profundum (strain SS9), this protein is Large ribosomal subunit protein uL30.